A 319-amino-acid chain; its full sequence is Ribonuclease Z (319 aa).

7 residues coordinate Zn(2+): His62, His64, Asp66, His67, His145, Asp216, and His274. Asp66 functions as the Proton acceptor in the catalytic mechanism.

It belongs to the RNase Z family. As to quaternary structure, homodimer. The cofactor is Zn(2+).

It carries out the reaction Endonucleolytic cleavage of RNA, removing extra 3' nucleotides from tRNA precursor, generating 3' termini of tRNAs. A 3'-hydroxy group is left at the tRNA terminus and a 5'-phosphoryl group is left at the trailer molecule.. Its function is as follows. Zinc phosphodiesterase, which displays some tRNA 3'-processing endonuclease activity. Probably involved in tRNA maturation, by removing a 3'-trailer from precursor tRNA. The protein is Ribonuclease Z of Parasynechococcus marenigrum (strain WH8102).